The chain runs to 103 residues: Large ribosomal subunit protein bL21 (103 aa).

It belongs to the bacterial ribosomal protein bL21 family. In terms of assembly, part of the 50S ribosomal subunit. Contacts protein L20.

Its function is as follows. This protein binds to 23S rRNA in the presence of protein L20. The protein is Large ribosomal subunit protein bL21 of Thiobacillus denitrificans (strain ATCC 25259 / T1).